Consider the following 438-residue polypeptide: Serine hydroxymethyltransferase 1 (438 aa).

(6S)-5,6,7,8-tetrahydrofolate-binding positions include Leu-130 and 134–136 (GHL). N6-(pyridoxal phosphate)lysine is present on Lys-239.

This sequence belongs to the SHMT family. As to quaternary structure, homodimer. Pyridoxal 5'-phosphate serves as cofactor.

It is found in the cytoplasm. The catalysed reaction is (6R)-5,10-methylene-5,6,7,8-tetrahydrofolate + glycine + H2O = (6S)-5,6,7,8-tetrahydrofolate + L-serine. It functions in the pathway one-carbon metabolism; tetrahydrofolate interconversion. The protein operates within amino-acid biosynthesis; glycine biosynthesis; glycine from L-serine: step 1/1. Catalyzes the reversible interconversion of serine and glycine with tetrahydrofolate (THF) serving as the one-carbon carrier. This reaction serves as the major source of one-carbon groups required for the biosynthesis of purines, thymidylate, methionine, and other important biomolecules. Also exhibits THF-independent aldolase activity toward beta-hydroxyamino acids, producing glycine and aldehydes, via a retro-aldol mechanism. Thus, is able to catalyze the cleavage of L-allo-threonine. This is Serine hydroxymethyltransferase 1 from Mycobacterium tuberculosis (strain ATCC 25618 / H37Rv).